Consider the following 522-residue polypeptide: 2-isopropylmalate synthase (522 aa).

Positions 5–267 constitute a Pyruvate carboxyltransferase domain; sequence VIIFDTTLRD…YTNINAREIH (263 aa). Residues aspartate 14, histidine 202, histidine 204, and asparagine 238 each contribute to the Mn(2+) site. The tract at residues 392-522 is regulatory domain; the sequence is VMEQLVVQSD…MQQTRELGGV (131 aa).

Belongs to the alpha-IPM synthase/homocitrate synthase family. LeuA type 1 subfamily. Homodimer. Requires Mn(2+) as cofactor.

Its subcellular location is the cytoplasm. It catalyses the reaction 3-methyl-2-oxobutanoate + acetyl-CoA + H2O = (2S)-2-isopropylmalate + CoA + H(+). It functions in the pathway amino-acid biosynthesis; L-leucine biosynthesis; L-leucine from 3-methyl-2-oxobutanoate: step 1/4. Functionally, catalyzes the condensation of the acetyl group of acetyl-CoA with 3-methyl-2-oxobutanoate (2-ketoisovalerate) to form 3-carboxy-3-hydroxy-4-methylpentanoate (2-isopropylmalate). This chain is 2-isopropylmalate synthase, found in Shewanella amazonensis (strain ATCC BAA-1098 / SB2B).